A 404-amino-acid polypeptide reads, in one-letter code: MPLELFDTADQEVRLVETPPAGSDTPVGMYVCGITPYDSTHLGHAATYLAFDLIYRILLDNDHDVHYVQNITDVDDPLFERAARDGVDWRDLGTSQINLFRSDMEALSIIPPKDYIGAIESIDEVIEMVKTLLDEGAAYIVEDAEYPDVYASINATDKFGYESNYDAATMAEFFAERGGDPERPGKKNPMDALLWRAAREGEPSWESPFGAGRPGWHIECSAIATNRLGHSFDIQGGGSDLIFPHHEFSAAHAEAAHGVERMAKHYVHAGMISQDGVKMSKSLGNLEFVSRLTAAGHEPGAIRLGVFANHYRGNRDWNAESLATAEQRLATWREAARAATNREDAIAVVEQLRAHLSADLDTPGALAAVDNWAAGIDTTTDSKEFTEVGNIVVAAIDALLGVQL.

C32 is a Zn(2+) binding site. L-cysteinyl-5'-AMP contacts are provided by residues 32 to 35 (CGIT), T47, and 70 to 72 (NIT). Positions 34–44 (ITPYDSTHLGH) match the 'HIGH' region motif. Positions 176 to 181 (ERGGDP) match the 'ERGGDP' region motif. W216 contributes to the L-cysteinyl-5'-AMP binding site. C220 is a binding site for Zn(2+). 238–240 (GSD) contributes to the L-cysteinyl-5'-AMP binding site. Position 245 (H245) interacts with Zn(2+). I272 contacts L-cysteinyl-5'-AMP. A 'KMSKS' region motif is present at residues 278 to 282 (KMSKS).

The protein belongs to the class-I aminoacyl-tRNA synthetase family. MshC subfamily. Monomer. Zn(2+) is required as a cofactor.

The catalysed reaction is 1D-myo-inositol 2-amino-2-deoxy-alpha-D-glucopyranoside + L-cysteine + ATP = 1D-myo-inositol 2-(L-cysteinylamino)-2-deoxy-alpha-D-glucopyranoside + AMP + diphosphate + H(+). Functionally, catalyzes the ATP-dependent condensation of GlcN-Ins and L-cysteine to form L-Cys-GlcN-Ins. This is L-cysteine:1D-myo-inositol 2-amino-2-deoxy-alpha-D-glucopyranoside ligase (mshC) from Corynebacterium glutamicum (strain ATCC 13032 / DSM 20300 / JCM 1318 / BCRC 11384 / CCUG 27702 / LMG 3730 / NBRC 12168 / NCIMB 10025 / NRRL B-2784 / 534).